The primary structure comprises 488 residues: Spermatogenesis-associated protein 6 (488 aa).

Positions 1–17 (MPKVKALQCALALEIRS) are cleaved as a signal peptide. The segment at 176 to 225 (HGRLQCRTSRSQKKKSKSPERSKYCINTKNYEQPTISSKSHSPSPYTKRR) is disordered. The segment covering 200–220 (CINTKNYEQPTISSKSHSPSP) has biased composition (polar residues). Residues serine 217 and serine 219 each carry the phosphoserine modification. Lysine 248 participates in a covalent cross-link: Glycyl lysine isopeptide (Lys-Gly) (interchain with G-Cter in SUMO2). Phosphoserine occurs at positions 265, 274, 325, 343, 346, 354, 424, 465, and 487.

This sequence belongs to the SPATA6 family. In terms of assembly, interacts with MYL6. As to expression, specifically expressed in developing spermatids and mature spermatozoa (at protein level). Isoform 1 is weakly expressed in testis, ovary, thymus and placenta. Isoform 2 and isoform 3 are testis-specific. Expression isw higher in spermatids than in spermatocytes and spermatogonia.

It localises to the secreted. Its subcellular location is the cell projection. It is found in the cilium. The protein localises to the flagellum. In terms of biological role, required for formation of the sperm connecting piece during spermiogenesis. Sperm connecting piece is essential for linking the developing flagellum to the head during late spermiogenesis. May be involved in myosin-based microfilament transport through interaction with myosin subunits. This is Spermatogenesis-associated protein 6 from Mus musculus (Mouse).